The following is a 341-amino-acid chain: Calcium-binding protein 39 (341 aa).

It belongs to the Mo25 family. As to quaternary structure, component of a trimeric complex composed of STK11/LKB1, STRAD (STRADA or STRADB) and CAB39/MO25 (CAB39/MO25alpha or CAB39L/MO25beta): the complex tethers STK11/LKB1 in the cytoplasm and stimulates its catalytic activity.

The protein localises to the cytoplasm. Component of a complex that binds and activates STK11/LKB1. In the complex, required to stabilize the interaction between CAB39/MO25 (CAB39/MO25alpha or CAB39L/MO25beta) and STK11/LKB1. In Bos taurus (Bovine), this protein is Calcium-binding protein 39 (CAB39).